The following is a 414-amino-acid chain: FAD-dependent monooxygenase adaC (414 aa).

FAD-binding residues include glutamate 32, alanine 43, arginine 115, aspartate 325, and glycine 338.

Belongs to the paxM FAD-dependent monooxygenase family. FAD is required as a cofactor.

It carries out the reaction 3-(2,4-dioxopentyl)-3,6,8,9-tetrahydroxy-1-oxo-1,2,3,4-tetrahydroanthracene-2-carboxyl-[ACP] + NADPH + O2 + H(+) = 3-(2,4-dioxopentyl)-2,3,6,8,9-pentahydroxy-1-oxo-1,2,3,4-tetrahydroanthracene-2-carboxyl-[ACP] + NADP(+) + H2O. It functions in the pathway secondary metabolite biosynthesis. In terms of biological role, FAD-dependent monooxygenase; part of the gene cluster that mediates the biosynthesis of the linear tetracyclic TAN-1612 neuropeptide Y receptor antagonist. The decaketide backbone of TAN-1612 is synthesized by the non-reducing polyketide synthase adaA via condensation of one acetyl-CoA starter unit with 9 malonyl-CoA units. The FAD-dependent monooxygenase adaC then performs hydroxylation at C2 while the polaketide chain is still attached to the NRPKS adaA. The alpha-hydroxylation step at C2 appears to be crucial for the following C18-C1 Claisen cyclization and release of the C9-hydroxyl version of TAN-1612 from the NRPKS adaA, two steps performed by the lactamase-like protein adaB. Finally, the O-methyltransferase adaD performs the C9 O-methylation to complete the biosynthesis of TAN-1612. The sequence is that of FAD-dependent monooxygenase adaC from Aspergillus niger.